The chain runs to 299 residues: Cold shock protein 1 (299 aa).

Ala-2 is modified (N-acetylalanine). The region spanning 12 to 76 (TGKVNWFNAS…GKTKAVNVTA (65 aa)) is the CSD domain. The tract at residues 76-97 (APGGGSLKKENNSRGNGARRGG) is disordered. CCHC-type zinc fingers lie at residues 100-117 (SGCYNCGELGHISKDCGI), 132-149 (EGCYNCGDTGHFARDCTS), 164-181 (DGCYTCGDVGHVARDCTQ), 198-215 (DGCYTCGDVGHFARDCTQ), 230-247 (GTCYSCGGVGHIARDCAT), 253-270 (RGCYQCGGSGHLARDCDQ), and 280-297 (NACYKCGKEGHFARECSS).

The protein belongs to the cold shock protein (CSP) family. As to expression, mostly expressed in shoot apices and siliques, and, to a lower extent, in roots, cotyledons, stems, shoots, leaves, floral buds and flowers.

It is found in the nucleus. The protein localises to the cytoplasm. Its function is as follows. Chaperone that binds to RNA, single- (ssDNA) and double-stranded (dsDNA) DNA, and unwinds nucleic acid duplex. Exhibits a DNA melting activity. May be involved in cold resistance. Prevents seed germination under dehydration or salt stress conditions. This is Cold shock protein 1 (CSP1) from Arabidopsis thaliana (Mouse-ear cress).